Reading from the N-terminus, the 56-residue chain is Sec-independent protein translocase protein TatA (56 aa).

A helical transmembrane segment spans residues 1 to 21 (MALGPWQIFLILVIILVLFGA).

It belongs to the TatA/E family. The Tat system comprises two distinct complexes: a TatABC complex, containing multiple copies of TatA, TatB and TatC subunits, and a separate TatA complex, containing only TatA subunits. Substrates initially bind to the TatABC complex, which probably triggers association of the separate TatA complex to form the active translocon.

Its subcellular location is the cell inner membrane. Part of the twin-arginine translocation (Tat) system that transports large folded proteins containing a characteristic twin-arginine motif in their signal peptide across membranes. TatA could form the protein-conducting channel of the Tat system. The chain is Sec-independent protein translocase protein TatA from Ehrlichia ruminantium (strain Welgevonden).